A 1168-amino-acid polypeptide reads, in one-letter code: DNA-directed RNA polymerase subunit beta (1168 aa).

This sequence belongs to the RNA polymerase beta chain family. In terms of assembly, the RNAP catalytic core consists of 2 alpha, 1 beta, 1 beta' and 1 omega subunit. When a sigma factor is associated with the core the holoenzyme is formed, which can initiate transcription.

The enzyme catalyses RNA(n) + a ribonucleoside 5'-triphosphate = RNA(n+1) + diphosphate. Its function is as follows. DNA-dependent RNA polymerase catalyzes the transcription of DNA into RNA using the four ribonucleoside triphosphates as substrates. The protein is DNA-directed RNA polymerase subunit beta of Rhodococcus jostii (strain RHA1).